A 514-amino-acid chain; its full sequence is MKTLLVLRISTVILVVLVIQKSYADILECDYFDTVDISAAQKLQNGSYLFEGLLVPAILTGEYDFRILPDDSKQKVARHIRGCVCKLKPCVRFCCPHDHIMDNGVCYDNMSDEELAELDPFLNVTLDDGSVSRRHFKNELIVQWDLPMPCDGMFYLDNREEQDKYTLFENGTFFRHFDRVTLRKREYCLQHLTFADGNATSIRIAPHNCLIVPSITGQTVVMISSLICMVLTIAVYLFVKKLQNLHGKCFICYMVCLFMGYLFLLLDLWQISISFCKPAGFLGYFFVMAAFFWLSVISLHLWNTFRGSSHKANRFLFEHRFLAYNTYAWGMAVVLTGITVLADNIVENQDWNPRVGHEGHCWIYTQAWSAMLYFYGPMVFLIAFNITMFILTAKRILGVKKDIQNFAHRQERKQKLNSDKQTYTFFLRLFIIMGLSWSLEIGSYFSQSNQTWANVFLVADYLNWSQGIIIFILFVLKRSTWRLLQESIRGEGEEVNNSEEEISLENTTTRNVLL.

The first 24 residues, 1-24 (MKTLLVLRISTVILVVLVIQKSYA), serve as a signal peptide directing secretion. The Extracellular portion of the chain corresponds to 25 to 218 (DILECDYFDT…CLIVPSITGQ (194 aa)). 5 cysteine pairs are disulfide-bonded: cysteine 29/cysteine 83, cysteine 85/cysteine 90, cysteine 94/cysteine 188, cysteine 95/cysteine 106, and cysteine 150/cysteine 209. N-linked (GlcNAc...) asparagine glycosylation occurs at asparagine 45. 4 N-linked (GlcNAc...) asparagine glycosylation sites follow: asparagine 109, asparagine 123, asparagine 170, and asparagine 198. Residues 219–239 (TVVMISSLICMVLTIAVYLFV) form a helical membrane-spanning segment. Over 240–248 (KKLQNLHGK) the chain is Cytoplasmic. Residues 249–269 (CFICYMVCLFMGYLFLLLDLW) traverse the membrane as a helical segment. Topologically, residues 270–278 (QISISFCKP) are extracellular. The helical transmembrane segment at 279 to 299 (AGFLGYFFVMAAFFWLSVISL) threads the bilayer. Topologically, residues 300 to 320 (HLWNTFRGSSHKANRFLFEHR) are cytoplasmic. Residues 321 to 341 (FLAYNTYAWGMAVVLTGITVL) form a helical membrane-spanning segment. At 342–370 (ADNIVENQDWNPRVGHEGHCWIYTQAWSA) the chain is on the extracellular side. The helical transmembrane segment at 371-391 (MLYFYGPMVFLIAFNITMFIL) threads the bilayer. Over 392-424 (TAKRILGVKKDIQNFAHRQERKQKLNSDKQTYT) the chain is Cytoplasmic. A helical membrane pass occupies residues 425–445 (FFLRLFIIMGLSWSLEIGSYF). Over 446–454 (SQSNQTWAN) the chain is Extracellular. An N-linked (GlcNAc...) asparagine glycan is attached at asparagine 449. The chain crosses the membrane as a helical span at residues 455 to 475 (VFLVADYLNWSQGIIIFILFV). Residues 476 to 514 (LKRSTWRLLQESIRGEGEEVNNSEEEISLENTTTRNVLL) are Cytoplasmic-facing.

The protein belongs to the G-protein coupled receptor 2 family. Mth subfamily. In terms of assembly, homodimer.

It is found in the cell membrane. In terms of biological role, involved in biological aging and stress response. Essential for adult survival. Required in the presynaptic motor neuron to up-regulate neurotransmitter exocytosis at larval glutamatergic neuromuscular junctions (NMJs). Regulates a step associated with docking and clustering of vesicles at release sites. SP/Acp70A and sun are agonists that activate mth in vitro. The protein is G-protein coupled receptor Mth (mth) of Drosophila melanogaster (Fruit fly).